Here is a 397-residue protein sequence, read N- to C-terminus: Argininosuccinate synthase (397 aa).

An ATP-binding site is contributed by 8–16; sequence AYSGGLDTS. Residues Tyr86 and Ser91 each coordinate L-citrulline. Residue Gly116 participates in ATP binding. Residues Thr118, Asn122, and Asp123 each coordinate L-aspartate. An L-citrulline-binding site is contributed by Asn122. Residues Arg126, Ser175, Ser184, Glu260, and Tyr272 each coordinate L-citrulline.

Belongs to the argininosuccinate synthase family. Type 1 subfamily. Homotetramer.

Its subcellular location is the cytoplasm. It catalyses the reaction L-citrulline + L-aspartate + ATP = 2-(N(omega)-L-arginino)succinate + AMP + diphosphate + H(+). It functions in the pathway amino-acid biosynthesis; L-arginine biosynthesis; L-arginine from L-ornithine and carbamoyl phosphate: step 2/3. This chain is Argininosuccinate synthase, found in Clostridium botulinum (strain Langeland / NCTC 10281 / Type F).